The primary structure comprises 427 residues: Amino acid transporter AVT3A (427 aa).

The tract at residues 1-35 (MRYDQEAGSSSHSLPSGSSSHSLPPTEDTPLLGPR) is disordered. Residues 1–42 (MRYDQEAGSSSHSLPSGSSSHSLPPTEDTPLLGPRTLSSQPK) are Cytoplasmic-facing. A compositionally biased stretch (low complexity) spans 8–24 (GSSSHSLPSGSSSHSLP). The chain crosses the membrane as a helical span at residues 43-63 (TFANVFIAIVGAGVLGLPYTF). Residues 64–69 (KKTGWL) are Vacuolar-facing. The chain crosses the membrane as a helical span at residues 70–90 (LGLLTLLFVSSLTFFCMMLLV). The Cytoplasmic portion of the chain corresponds to 91–122 (HTRRKLESLSGFNSITSFGDLGESVCGPAGRL). A helical membrane pass occupies residues 123-143 (VVDVMLVLSQSGFCVSYLIFV). Over 144–157 (ATTMANLLSRGTEH) the chain is Vacuolar. A helical membrane pass occupies residues 158–178 (ILGLDAASIYLWGCFPFQLGL). The Cytoplasmic portion of the chain corresponds to 179–186 (NSIPSLTH). Residues 187-207 (LAPLSIFADIVDVAATLVVMV) traverse the membrane as a helical segment. At 208-227 (QDVFIFLKRRPPLRVFGGVS) the chain is on the vacuolar side. A helical membrane pass occupies residues 228–248 (VFFYGLGVAVYAFEGIGMVLP). Residues 249-262 (LELEAKYKDKFGRA) are Cytoplasmic-facing. The helical transmembrane segment at 263 to 283 (LGLAMGLISIMYGAFGLLGYM) threads the bilayer. Residues 284–300 (AYGEETKDIITTNLGTG) lie on the Vacuolar side of the membrane. Residues 301 to 321 (VVSTLVQLGLAINLFFTFPLM) traverse the membrane as a helical segment. Over 322–339 (MQPVYEVVERRLCSSRYS) the chain is Cytoplasmic. Residues 340-360 (VWVRWATVLVVTLVALLVPNF) form a helical membrane-spanning segment. Residues 361–362 (AD) lie on the Vacuolar side of the membrane. Residues 363–383 (FLSLVGSSVCVVLGFVLPSLF) traverse the membrane as a helical segment. The Cytoplasmic segment spans residues 384 to 396 (HLQAFKNELSITR). Residues 397–417 (IVVDVLVFLIGVMIAITGTWT) traverse the membrane as a helical segment. At 418–427 (AVHEILTSKA) the chain is on the vacuolar side.

This sequence belongs to the amino acid/polyamine transporter 2 family. Amino acid/auxin permease (AAAP) (TC 2.A.18.8) subfamily. As to expression, ubiquitous.

The protein localises to the vacuole membrane. Translocates preferentially neutral amino acids and to a lesser extent aromatic amino acids from the vacuole to the cytoplasm. Requires ATP for function. The protein is Amino acid transporter AVT3A of Arabidopsis thaliana (Mouse-ear cress).